Reading from the N-terminus, the 486-residue chain is Cardiolipin synthase A (486 aa).

2 helical membrane passes run 3 to 23 (TFYT…IAGV) and 38 to 58 (MAWL…YLSF). PLD phosphodiesterase domains are found at residues 219–246 (MDLR…VDPR) and 399–426 (KDGL…DMRS). Residues His-224, Lys-226, Asp-231, His-404, Lys-406, and Asp-411 contribute to the active site.

This sequence belongs to the phospholipase D family. Cardiolipin synthase subfamily. ClsA sub-subfamily.

It localises to the cell inner membrane. It carries out the reaction 2 a 1,2-diacyl-sn-glycero-3-phospho-(1'-sn-glycerol) = a cardiolipin + glycerol. In terms of biological role, catalyzes the reversible phosphatidyl group transfer from one phosphatidylglycerol molecule to another to form cardiolipin (CL) (diphosphatidylglycerol) and glycerol. The sequence is that of Cardiolipin synthase A from Pectobacterium atrosepticum (strain SCRI 1043 / ATCC BAA-672) (Erwinia carotovora subsp. atroseptica).